We begin with the raw amino-acid sequence, 211 residues long: Ferric nitrobindin-like protein (211 aa).

The GXWXGXG motif lies at 21-27; it reads GRWRGPG. Residues 104–130 are disordered; the sequence is GVVQEGSDTRTEPGGAEPDPAGRRAPS.

Belongs to the nitrobindin family.

This Beutenbergia cavernae (strain ATCC BAA-8 / DSM 12333 / CCUG 43141 / JCM 11478 / NBRC 16432 / NCIMB 13614 / HKI 0122) protein is Ferric nitrobindin-like protein.